The primary structure comprises 101 residues: Urease subunit gamma (101 aa).

This sequence belongs to the urease gamma subunit family. As to quaternary structure, heterotrimer of UreA (gamma), UreB (beta) and UreC (alpha) subunits. Three heterotrimers associate to form the active enzyme.

The protein localises to the cytoplasm. The enzyme catalyses urea + 2 H2O + H(+) = hydrogencarbonate + 2 NH4(+). It functions in the pathway nitrogen metabolism; urea degradation; CO(2) and NH(3) from urea (urease route): step 1/1. The sequence is that of Urease subunit gamma from Corynebacterium kroppenstedtii (strain DSM 44385 / JCM 11950 / CIP 105744 / CCUG 35717).